A 56-amino-acid polypeptide reads, in one-letter code: Large ribosomal subunit protein bL32 (56 aa).

Positions Met-1–Val-29 are disordered.

It belongs to the bacterial ribosomal protein bL32 family.

The chain is Large ribosomal subunit protein bL32 from Pectobacterium atrosepticum (strain SCRI 1043 / ATCC BAA-672) (Erwinia carotovora subsp. atroseptica).